A 422-amino-acid chain; its full sequence is Beta-1,3-galactosyltransferase 2 (422 aa).

Over 1–20 (MLQWRRRHCCFAKMTWSPKR) the chain is Cytoplasmic. The chain crosses the membrane as a helical; Signal-anchor for type II membrane protein span at residues 21–43 (SLLRTPLTGVLSLVFLFAMFLFF). The Lumenal segment spans residues 44–422 (NHHDWLPGRP…AGRYRHRKLH (379 aa)). N-linked (GlcNAc...) asparagine glycans are attached at residues Asn-75, Asn-98, Asn-119, Asn-176, and Asn-226. The interval 91-110 (LRPHTASNSSNTELSPQGVT) is disordered. Residues 95–110 (TASNSSNTELSPQGVT) show a composition bias toward polar residues.

It belongs to the glycosyltransferase 31 family. Requires Mn(2+) as cofactor. Detected in brain and heart.

The protein localises to the golgi apparatus membrane. The catalysed reaction is an N-acetyl-beta-D-glucosaminyl derivative + UDP-alpha-D-galactose = a beta-D-galactosyl-(1-&gt;3)-N-acetyl-beta-D-glucosaminyl derivative + UDP + H(+). It carries out the reaction a beta-D-GlcNAc-(1-&gt;3)-beta-D-Gal-(1-&gt;4)-beta-D-Glc-(1&lt;-&gt;1)-Cer(d18:1(4E)) + UDP-alpha-D-galactose = a beta-D-Gal-(1-&gt;3)-beta-D-GlcNAc-(1-&gt;3)-beta-D-Gal-(1-&gt;4)-beta-D-Glc-(1&lt;-&gt;1')-Cer(d18:1(4E)) + UDP + H(+). It catalyses the reaction a neolactoside IV(3)-beta-GlcNAc-nLc4Cer(d18:1(4E)) + UDP-alpha-D-galactose = a neolactoside IV(3)-beta-[Gal-beta-(1-&gt;3)-GlcNAc]-nLc4Cer(d18:1(4E)) + UDP + H(+). It functions in the pathway protein modification; protein glycosylation. Its function is as follows. Beta-1,3-galactosyltransferase that transfers galactose from UDP-galactose to substrates with a terminal beta-N-acetylglucosamine (beta-GlcNAc) residue. Can also utilize substrates with a terminal galactose residue, albeit with lower efficiency. Involved in the biosynthesis of the carbohydrate moieties of glycolipids and glycoproteins. This chain is Beta-1,3-galactosyltransferase 2, found in Mus musculus (Mouse).